We begin with the raw amino-acid sequence, 210 residues long: Methylthioribulose-1-phosphate dehydratase (210 aa).

Zn(2+) contacts are provided by His97 and His99.

It belongs to the aldolase class II family. MtnB subfamily. Homotetramer. Zn(2+) is required as a cofactor.

It catalyses the reaction 5-(methylsulfanyl)-D-ribulose 1-phosphate = 5-methylsulfanyl-2,3-dioxopentyl phosphate + H2O. It participates in amino-acid biosynthesis; L-methionine biosynthesis via salvage pathway; L-methionine from S-methyl-5-thio-alpha-D-ribose 1-phosphate: step 2/6. Functionally, catalyzes the dehydration of methylthioribulose-1-phosphate (MTRu-1-P) into 2,3-diketo-5-methylthiopentyl-1-phosphate (DK-MTP-1-P). The sequence is that of Methylthioribulose-1-phosphate dehydratase from Geobacillus kaustophilus (strain HTA426).